The sequence spans 229 residues: Biosynthetic peptidoglycan transglycosylase (229 aa).

A helical membrane pass occupies residues 10-30 (LLLALVLVVLYQFWIFMHILW).

Belongs to the glycosyltransferase 51 family.

It localises to the cell inner membrane. The catalysed reaction is [GlcNAc-(1-&gt;4)-Mur2Ac(oyl-L-Ala-gamma-D-Glu-L-Lys-D-Ala-D-Ala)](n)-di-trans,octa-cis-undecaprenyl diphosphate + beta-D-GlcNAc-(1-&gt;4)-Mur2Ac(oyl-L-Ala-gamma-D-Glu-L-Lys-D-Ala-D-Ala)-di-trans,octa-cis-undecaprenyl diphosphate = [GlcNAc-(1-&gt;4)-Mur2Ac(oyl-L-Ala-gamma-D-Glu-L-Lys-D-Ala-D-Ala)](n+1)-di-trans,octa-cis-undecaprenyl diphosphate + di-trans,octa-cis-undecaprenyl diphosphate + H(+). Its pathway is cell wall biogenesis; peptidoglycan biosynthesis. Peptidoglycan polymerase that catalyzes glycan chain elongation from lipid-linked precursors. This chain is Biosynthetic peptidoglycan transglycosylase, found in Methylobacillus flagellatus (strain ATCC 51484 / DSM 6875 / VKM B-1610 / KT).